Consider the following 123-residue polypeptide: Mediator of RNA polymerase II transcription subunit 9 (123 aa).

Positions 95–123 (WQLHIQEKKIELEKKTKHLQRLRESIQKQ) form a coiled coil.

Belongs to the Mediator complex subunit 9 family. In terms of assembly, component of the Mediator complex.

The protein localises to the nucleus. Its function is as follows. Component of the Mediator complex, a coactivator involved in the regulated transcription of nearly all RNA polymerase II-dependent genes. Mediator functions as a bridge to convey information from gene-specific regulatory proteins to the basal RNA polymerase II transcription machinery. Mediator is recruited to promoters by direct interactions with regulatory proteins and serves as a scaffold for the assembly of a functional preinitiation complex with RNA polymerase II and the general transcription factors. The sequence is that of Mediator of RNA polymerase II transcription subunit 9 (CSE2) from Kluyveromyces lactis (strain ATCC 8585 / CBS 2359 / DSM 70799 / NBRC 1267 / NRRL Y-1140 / WM37) (Yeast).